Here is a 338-residue protein sequence, read N- to C-terminus: HLA class I histocompatibility antigen, alpha chain G (338 aa).

The first 24 residues, 1-24 (MVVMAPRTLFLLLSGALTLTETWA), serve as a signal peptide directing secretion. Positions 3-11 (VMAPRTLFL) are VL9 epitope. Residues 25–114 (GSHSMRYFSA…LRGYYNQSEA (90 aa)) are alpha-1. The Extracellular segment spans residues 25-308 (GSHSMRYFSA…KQSSLPTIPI (284 aa)). 4 residues coordinate a peptide antigen: Tyr-31, His-94, Asn-101, and Tyr-108. Asn-110 is a glycosylation site (N-linked (GlcNAc...) asparagine). The tract at residues 115-206 (SSHTLQWMIG…ENGKEMLQRA (92 aa)) is alpha-2. A disulfide bridge connects residues Cys-125 and Cys-188. A peptide antigen is bound by residues Ser-167, Lys-170, Gln-179, Arg-180, Tyr-183, and Tyr-195. An alpha-3 region spans residues 207-298 (DPPKTHVTHH…GLPEPLMLRW (92 aa)). The region spanning 209-299 (PKTHVTHHPV…LPEPLMLRWK (91 aa)) is the Ig-like C1-type domain. Cys-227 and Cys-283 are joined by a disulfide. The connecting peptide stretch occupies residues 299 to 308 (KQSSLPTIPI). The helical transmembrane segment at 309–332 (MGIVAGLVVLAAVVTGAAVAAVLW) threads the bilayer. The Cytoplasmic portion of the chain corresponds to 333 to 338 (RKKSSD). An ER-retrieval signal motif is present at residues 334-336 (KKS).

Belongs to the MHC class I family. Forms a heterotrimer with B2M and a self-peptide (peptide-bound HLA-G-B2M). HLA-G-B2M complex interacts with components of the antigen processing machinery TAPBP and TAP1-TAP2 complex; this interaction is required for loading of high affinity peptides and heterotrimer translocation to the cell surface. Interacts with CALCR; this interaction is required for appropriate folding. Interacts with COPB1; this interaction mediates the endoplasmic reticulum (ER) retrieval of HLA-G-B2M complexes that bind low affinity peptides. On the cell surface, peptide-bound HLA-G-B2M molecules (referred to as monomers) can form disulfide-linked homomultimers, homodimers and homotrimers. Interacts with KIR2DL4; this interaction is direct. Interacts with LILRB1 and LILRB2 receptors; this interaction is direct. Interacts with CD160; this interactions is direct. Interacts with CD8A homodimer; this interaction is direct and might down-regulate T cell receptor signaling. Isoform 2: Forms a non-disulfide-linked homodimer and interacts with LILRB2. In terms of processing, N-glycosylated. Post-translationally, produced by proteolytic cleavage at the cell surface (shedding) by matrix metalloproteinase MMP2. In terms of tissue distribution, expressed in adult eye. Expressed in immune cell subsets including monocytes, myeloid and plasmacytoid dendritic cells and regulatory T cells (Tr1)(at protein level). Secreted by follicular dendritic cell and follicular helper T cells. As to expression, detected in physiological fluids including amniotic fluid and serum. Expressed in placenta, amniotic membrane, skin, cord blood and peripheral blood mononuclear cells.

The protein resides in the cell membrane. It localises to the endoplasmic reticulum membrane. It is found in the early endosome membrane. The protein localises to the secreted. Its subcellular location is the early endosome. The protein resides in the cell projection. It localises to the filopodium membrane. In terms of biological role, non-classical major histocompatibility class Ib molecule involved in immune regulatory processes at the maternal-fetal interface. In complex with B2M/beta-2 microglobulin binds a limited repertoire of nonamer self-peptides derived from intracellular proteins including histones and ribosomal proteins. Peptide-bound HLA-G-B2M complex acts as a ligand for inhibitory/activating KIR2DL4, LILRB1 and LILRB2 receptors on uterine immune cells to promote fetal development while maintaining maternal-fetal tolerance. Upon interaction with KIR2DL4 and LILRB1 receptors on decidual NK cells, it triggers NK cell senescence-associated secretory phenotype as a molecular switch to promote vascular remodeling and fetal growth in early pregnancy. Through interaction with KIR2DL4 receptor on decidual macrophages induces pro-inflammatory cytokine production mainly associated with tissue remodeling. Through interaction with LILRB2 receptor triggers differentiation of type 1 regulatory T cells and myeloid-derived suppressor cells, both of which actively maintain maternal-fetal tolerance. May play a role in balancing tolerance and antiviral-immunity at maternal-fetal interface by keeping in check the effector functions of NK, CD8+ T cells and B cells. Reprograms B cells toward an immune suppressive phenotype via LILRB1. May induce immune activation/suppression via intercellular membrane transfer (trogocytosis), likely enabling interaction with KIR2DL4, which resides mostly in endosomes. Through interaction with the inhibitory receptor CD160 on endothelial cells may control angiogenesis in immune privileged sites. Likely does not bind B2M and presents peptides. Negatively regulates NK cell- and CD8+ T cell-mediated cytotoxicity. Functionally, non-classical major histocompatibility class Ib molecule involved in immune regulatory processes at the maternal-fetal interface. In complex with B2M/beta-2 microglobulin binds a limited repertoire of nonamer self-peptides derived from intracellular proteins including histones and ribosomal proteins. Peptide-bound HLA-G-B2M complex acts as a ligand for inhibitory/activating KIR2DL4, LILRB1 and LILRB2 receptors on uterine immune cells to promote fetal development while maintaining maternal-fetal tolerance. Upon interaction with KIR2DL4 and LILRB1 receptors on decidual NK cells, it triggers NK cell senescence-associated secretory phenotype as a molecular switch to promote vascular remodeling and fetal growth in early pregnancy. Through interaction with KIR2DL4 receptor on decidual macrophages induces pro-inflammatory cytokine production mainly associated with tissue remodeling. Through interaction with LILRB2 receptor triggers differentiation of type 1 regulatory T cells and myeloid-derived suppressor cells, both of which actively maintain maternal-fetal tolerance. Reprograms B cells toward an immune suppressive phenotype via LILRB1. Its function is as follows. Likely does not bind B2M and presents peptides. The protein is HLA class I histocompatibility antigen, alpha chain G of Homo sapiens (Human).